A 323-amino-acid chain; its full sequence is Tumor-associated calcium signal transducer 2 (323 aa).

The signal sequence occupies residues 1-26 (MARGPGLAPPPLRLPLLLLVLAAVTG). Residues 27–274 (HTAAQDNCTC…PPKFSMKRLT (248 aa)) lie on the Extracellular side of the membrane. Residue asparagine 33 is glycosylated (N-linked (GlcNAc...) asparagine). The Thyroglobulin type-1 domain occupies 70–145 (TSKCLLLKAR…TDKGDLSLRC (76 aa)). Disulfide bonds link cysteine 73–cysteine 108, cysteine 119–cysteine 125, and cysteine 127–cysteine 145. Asparagine 120 is a glycosylation site (N-linked (GlcNAc...) asparagine). 2 N-linked (GlcNAc...) asparagine glycosylation sites follow: asparagine 168 and asparagine 208. Residues 275-297 (AGLIAVIVVVVVALVAGMAVLVI) traverse the membrane as a helical segment. At 298-323 (TNRRKSGKYKKVEIKELGELRKEPSL) the chain is on the cytoplasmic side.

This sequence belongs to the EPCAM family. The N-terminus is blocked. As to expression, placenta, pancreatic carcinoma cell lines.

The protein resides in the membrane. May function as a growth factor receptor. The polypeptide is Tumor-associated calcium signal transducer 2 (TACSTD2) (Homo sapiens (Human)).